Here is a 70-residue protein sequence, read N- to C-terminus: MKSQTFFLLFLVVLLLAISQSEAFIGAIANLLSKIFGKRSMRDMDTMKYLYDPSLSAADLKTLQKLMENY.

A signal peptide spans 1–23 (MKSQTFFLLFLVVLLLAISQSEA). Phenylalanine amide is present on Phe-36. Residues 40–70 (SMRDMDTMKYLYDPSLSAADLKTLQKLMENY) constitute a propeptide that is removed on maturation.

This sequence belongs to the non-disulfide-bridged peptide (NDBP) superfamily. Short antimicrobial peptide (group 4) family. Expressed by the venom gland.

It is found in the secreted. The protein resides in the target cell membrane. In terms of biological role, antimicrobial peptide with potent activity against bacteria. Has strong antibacterial activity against Gram-positive bacteria S.aureus, M.luteus, B.subtilis, and Gram-negative bacteria E.coli, P.aeruginosa and N.gonorrhoeae. Also shows low activity against HIV-1 PV. The sequence is that of Peptide BmKn2 from Olivierus martensii (Manchurian scorpion).